We begin with the raw amino-acid sequence, 231 residues long: 7-cyano-7-deazaguanine synthase (231 aa).

8–18 (FSGGQDSTTCL) contacts ATP. Cysteine 188, cysteine 197, cysteine 200, and cysteine 203 together coordinate Zn(2+).

The protein belongs to the QueC family. Zn(2+) is required as a cofactor.

It catalyses the reaction 7-carboxy-7-deazaguanine + NH4(+) + ATP = 7-cyano-7-deazaguanine + ADP + phosphate + H2O + H(+). It participates in purine metabolism; 7-cyano-7-deazaguanine biosynthesis. Its function is as follows. Catalyzes the ATP-dependent conversion of 7-carboxy-7-deazaguanine (CDG) to 7-cyano-7-deazaguanine (preQ(0)). In Erwinia tasmaniensis (strain DSM 17950 / CFBP 7177 / CIP 109463 / NCPPB 4357 / Et1/99), this protein is 7-cyano-7-deazaguanine synthase.